A 485-amino-acid chain; its full sequence is MKSFNTEGHNHSTAESGDAYTVSDPTKNVDEDGREKRTGTWLTASAHIITAVIGSGVLSLAWAIAQLGWIAGTSILLIFSFITYFTSTMLADCYRAPDPVTGKRNYTYMDVVRSYLGGRKVQLCGVAQYGNLIGVTVGYTITASISLVAVGKSNCFHDKGHTADCTISNYPYMAVFGIIQVILSQIPNFHKLSFLSIMAAVMSFTYATIGIGLAIATVAGGKVGKTSMTGTAVGVDVTAAQKIWRSFQAVGDIAFAYAYATVLIEIQDTLRSSPAENKAMKRASLVGVSTTTFFYILCGCIGYAAFGNNAPGDFLTDFGFFEPFWLIDFANACIAVHLIGAYQVFAQPIFQFVEKKCNRNYPDNKFITSEYSVNVPFLGKFNISLFRLVWRTAYVVITTVVAMIFPFFNAILGLIGAASFWPLTVYFPVEMHIAQTKIKKYSARWIALKTMCYVCLIVSLLAAAGSIAGLISSVKTYKPFRTMHE.

The segment covering 1–15 (MKSFNTEGHNHSTAE) has biased composition (polar residues). The interval 1-35 (MKSFNTEGHNHSTAESGDAYTVSDPTKNVDEDGRE) is disordered. Topologically, residues 1-40 (MKSFNTEGHNHSTAESGDAYTVSDPTKNVDEDGREKRTGT) are cytoplasmic. The next 2 membrane-spanning stretches (helical) occupy residues 41 to 61 (WLTA…LSLA) and 62 to 82 (WAIA…FSFI). At 83–129 (TYFTSTMLADCYRAPDPVTGKRNYTYMDVVRSYLGGRKVQLCGVAQY) the chain is on the cytoplasmic side. A helical transmembrane segment spans residues 130 to 150 (GNLIGVTVGYTITASISLVAV). At 151 to 166 (GKSNCFHDKGHTADCT) the chain is on the extracellular side. Residues 167–187 (ISNYPYMAVFGIIQVILSQIP) traverse the membrane as a helical segment. The Cytoplasmic portion of the chain corresponds to 188 to 194 (NFHKLSF). The helical transmembrane segment at 195–215 (LSIMAAVMSFTYATIGIGLAI) threads the bilayer. Residues 216–245 (ATVAGGKVGKTSMTGTAVGVDVTAAQKIWR) are Extracellular-facing. The chain crosses the membrane as a helical span at residues 246–266 (SFQAVGDIAFAYAYATVLIEI). Residues 267-285 (QDTLRSSPAENKAMKRASL) are Cytoplasmic-facing. A helical membrane pass occupies residues 286-306 (VGVSTTTFFYILCGCIGYAAF). The Extracellular portion of the chain corresponds to 307–318 (GNNAPGDFLTDF). A helical membrane pass occupies residues 319-339 (GFFEPFWLIDFANACIAVHLI). The Cytoplasmic segment spans residues 340-394 (GAYQVFAQPIFQFVEKKCNRNYPDNKFITSEYSVNVPFLGKFNISLFRLVWRTAY). A run of 2 helical transmembrane segments spans residues 395 to 415 (VVIT…LGLI) and 416 to 436 (GAAS…IAQT). Residues 437 to 450 (KIKKYSARWIALKT) are Cytoplasmic-facing. A helical transmembrane segment spans residues 451–471 (MCYVCLIVSLLAAAGSIAGLI). The Extracellular segment spans residues 472–485 (SSVKTYKPFRTMHE).

Belongs to the amino acid/polyamine transporter 2 family. Amino acid/auxin permease (AAAP) (TC 2.A.18.2) subfamily. In terms of tissue distribution, highly expressed in developing pods. Found in the endosperm and in the storage parenchyma and the outer epidermis cells of the developing embryo. Lower levels of expression in flowers, in the vascular system of the cotyledon and in the root epidermal cells, including root hairs and throughout the root tip.

It localises to the cell membrane. Inhibited by carbonylcyanide m-chlorophenylhydrazone and diethylpyrocarbonate (DEPC). Its function is as follows. Amino acid-proton symporter. Stereospecific transporter with a broad specificity for histidine, glutamate and neutral amino acids. Reduced affinities for asparagine and valine. Involved in amino acid uptake from the apoplastic cavity into the embryo cells for storage protein accumulation and in root amino acid uptake. This chain is Amino acid permease 1 (AAP1), found in Arabidopsis thaliana (Mouse-ear cress).